Consider the following 143-residue polypeptide: Transcriptional regulator MraZ (143 aa).

SpoVT-AbrB domains lie at 5–47 (EFLH…PMDE) and 76–119 (AIEC…ANDA).

This sequence belongs to the MraZ family. Forms oligomers.

It is found in the cytoplasm. The protein localises to the nucleoid. This chain is Transcriptional regulator MraZ, found in Oceanobacillus iheyensis (strain DSM 14371 / CIP 107618 / JCM 11309 / KCTC 3954 / HTE831).